Consider the following 874-residue polypeptide: Alanine--tRNA ligase (874 aa).

Residues His-562, His-566, Cys-665, and His-669 each coordinate Zn(2+).

It belongs to the class-II aminoacyl-tRNA synthetase family. Zn(2+) is required as a cofactor.

The protein resides in the cytoplasm. It catalyses the reaction tRNA(Ala) + L-alanine + ATP = L-alanyl-tRNA(Ala) + AMP + diphosphate. In terms of biological role, catalyzes the attachment of alanine to tRNA(Ala) in a two-step reaction: alanine is first activated by ATP to form Ala-AMP and then transferred to the acceptor end of tRNA(Ala). Also edits incorrectly charged Ser-tRNA(Ala) and Gly-tRNA(Ala) via its editing domain. This chain is Alanine--tRNA ligase, found in Stutzerimonas stutzeri (strain A1501) (Pseudomonas stutzeri).